The primary structure comprises 853 residues: MPLSEPRQIKKPRLSLSCIVCRRRKVRCGREQPECANCVRMKENCVYRTMVRDESTGRVRPVSPQDKDSRVSTSDARPDLPWPHWGRDTNAPYPDKPSRPPSRPQVSANASPSPQRQEPYPTVPSWEEAIQLPSYRDANAPQINGSSTTTRDPSPAPSTSLFPTPSDHPCRDYLSIRRGGRVRYVGQTFWGFVAGKESLSDDFFDENRHAHPDLPLPHISSMGMFNLLRSLPTKPVSDTLLETFFLAVWPLVPLLHPPSLQADYDEFWEWCRNSENALPSDKLRDDPTLICLLFAVLYCGASAAPAATWANTNLQGLQKETTVSHLKSAYTTSLSLCQHQEHPTLNTLVSNLLTGPFLDRPFEPMRSLVNVSTTVRIAQTMGLHREGAWSALSSVDREIRRRVWWHIVWLDVQSSISTGLTPCCGNEALDAVGMVGTDHVEPSNIPAGLSPPNELVTNRQSVAMLYAIGRFQTARLQARIVAHLQSAHDPSQDGFGELITDSKELLQKIDSLIARVPTQGIPEMGYIPSRLANASPSTQPLLYKDDPSQPTVFSAWTRIMLTLLKSEMAILLQKPFLPPPDSANPQSLKSWTSMAQLCVNYLRIYLQLYQAPAFSPYAWFCCSHYGPLQCVFITLMYLHYFQHSGETTLARYCVDEVIHHCVAQYQAPDPSSTRTSPDDTDSNGGKLRMPLAIQVLVDLHERLDSSLGPEDRAPPLDLIECQARFSMSHLATKASDLRATSDQPSSDVSSTTRTHHNCETPPITTGAPPVAAGNKPVPPNSVFVAGSDSGLDMDFLATISDLEAWSSSLILESDNLLARPDDMTPDHAVITRLGSQSTASGRRGLPDGLDFPG.

Residues 18 to 45 (CIVCRRRKVRCGREQPECANCVRMKENC) constitute a DNA-binding region (zn(2)-C6 fungal-type). Disordered stretches follow at residues 54 to 122 (ESTG…PYPT), 138 to 166 (ANAP…PTPS), 734 to 775 (ASDL…AGNK), and 833 to 853 (LGSQ…DFPG). 3 stretches are compositionally biased toward polar residues: residues 104 to 116 (PQVS…SPQR), 141 to 163 (PQIN…SLFP), and 738 to 752 (RATS…SSTT).

Its subcellular location is the nucleus. In terms of biological role, transcription factor that regulates the expression of the gene cluster that mediates the biosynthesis of macrophorins, isoprenoid epoxycyclohexenones containing cyclized drimane moieties. The protein is Transcription factor macR of Penicillium terrestre.